The chain runs to 241 residues: Chlorophyll a-b binding protein 6, chloroplastic (241 aa).

The transit peptide at methionine 1–asparagine 35 directs the protein to the chloroplast. Tryptophan 48 is a binding site for chlorophyll b. Chlorophyll a is bound by residues phenylalanine 68, glutamate 87, and histidine 90. Arginine 92 provides a ligand contact to chlorophyll b. Residues tryptophan 93 to valine 113 traverse the membrane as a helical segment. Leucine 129 is a chlorophyll a binding site. Residues proline 132 to valine 152 form a helical membrane-spanning segment. Residues valine 133, glutamate 153, and arginine 156 each coordinate chlorophyll b. Chlorophyll a contacts are provided by lysine 190, glutamate 191, asparagine 194, arginine 196, glutamine 208, and histidine 224. A helical membrane pass occupies residues leucine 197–proline 217.

The protein belongs to the light-harvesting chlorophyll a/b-binding (LHC) protein family. In terms of assembly, the LHC complex consists of chlorophyll a-b binding proteins. Red-emitting heterodimer with LHCA4. Interacts with LHCA5. Binds at least 14 chlorophylls (8 Chl-a and 6 Chl-b) and carotenoids such as lutein and neoxanthin. is required as a cofactor. Photoregulated by reversible phosphorylation of its threonine residues.

It localises to the plastid. Its subcellular location is the chloroplast thylakoid membrane. Its function is as follows. The light-harvesting complex (LHC) functions as a light receptor, it captures and delivers excitation energy to photosystems with which it is closely associated. In Arabidopsis thaliana (Mouse-ear cress), this protein is Chlorophyll a-b binding protein 6, chloroplastic.